Here is a 196-residue protein sequence, read N- to C-terminus: Charged multivesicular body protein 1a (196 aa).

An N-acetylmethionine modification is found at Met-1. Positions 5-47 (LFQLKFTAKQLEKLAKKAEKDSKAEQAKVKKALLQKNVECARV) form a coiled coil. Residue Ser-101 is modified to Phosphoserine. Positions 102–124 (TMDLQKVSSVMDRFEQQVQNLDV) form a coiled coil. The residue at position 173 (Ser-173) is a Phosphoserine. The segment at 173 to 196 (SAVGESSVRSQEDQLSRRLAALRN) is disordered. Positions 185–195 (DQLSRRLAALR) match the MIT-interacting motif motif.

It belongs to the SNF7 family. In terms of assembly, probable peripherally associated component of the endosomal sorting required for transport complex III (ESCRT-III). ESCRT-III components are thought to multimerize to form a flat lattice on the perimeter membrane of the endosome. Several assembly forms of ESCRT-III may exist that interact and act sequentially. Self-associates. Interacts with CHMP1B. Interacts with VPS4A. Interacts with VPS4B. Interacts with PHF1. Interacts with IST1. Interacts with MITD1. As to expression, expressed in placenta, cultured skin fibroblasts and in osteoblast cell line MG-63.

The protein resides in the cytoplasm. Its subcellular location is the endosome membrane. It is found in the nucleus matrix. Probable peripherally associated component of the endosomal sorting required for transport complex III (ESCRT-III) which is involved in multivesicular bodies (MVBs) formation and sorting of endosomal cargo proteins into MVBs. MVBs contain intraluminal vesicles (ILVs) that are generated by invagination and scission from the limiting membrane of the endosome and mostly are delivered to lysosomes enabling degradation of membrane proteins, such as stimulated growth factor receptors, lysosomal enzymes and lipids. The MVB pathway appears to require the sequential function of ESCRT-O, -I,-II and -III complexes. ESCRT-III proteins mostly dissociate from the invaginating membrane before the ILV is released. The ESCRT machinery also functions in topologically equivalent membrane fission events, such as the terminal stages of cytokinesis and the budding of enveloped viruses (HIV-1 and other lentiviruses). ESCRT-III proteins are believed to mediate the necessary vesicle extrusion and/or membrane fission activities, possibly in conjunction with the AAA ATPase VPS4. Involved in cytokinesis. Involved in recruiting VPS4A and/or VPS4B to the midbody of dividing cells. May also be involved in chromosome condensation. Targets the Polycomb group (PcG) protein BMI1/PCGF4 to regions of condensed chromatin. May play a role in stable cell cycle progression and in PcG gene silencing. This is Charged multivesicular body protein 1a (CHMP1A) from Homo sapiens (Human).